Here is a 326-residue protein sequence, read N- to C-terminus: 5,10-methylenetetrahydromethanopterin reductase (326 aa).

It belongs to the mer family.

It is found in the cytoplasm. It catalyses the reaction 5-methyl-5,6,7,8-tetrahydromethanopterin + oxidized coenzyme F420-(gamma-L-Glu)(n) + H(+) = 5,10-methylenetetrahydromethanopterin + reduced coenzyme F420-(gamma-L-Glu)(n). The protein operates within one-carbon metabolism; methanogenesis from CO(2); methyl-coenzyme M from 5,10-methylene-5,6,7,8-tetrahydromethanopterin: step 1/2. Catalyzes the reversible reduction of methylene-H(4)MPT to methyl-H(4)MPT. This chain is 5,10-methylenetetrahydromethanopterin reductase, found in Methanolobus tindarius.